The chain runs to 437 residues: C-terminal-binding protein 2 (437 aa).

NAD(+) is bound by residues Ser-103, 183-188 (IGLGRI), Asp-207, 240-246 (CNLNEHN), 267-269 (TAR), and Asp-293. Arg-269 is a catalytic residue. Glu-298 is a catalytic residue. His-318 serves as the catalytic Proton donor. 318 to 321 (HTAW) is an NAD(+) binding site. The disordered stretch occupies residues 410–437 (PLIPSVSHTPSPGQTTKPDPDREIPTDQ). Residues 415–426 (VSHTPSPGQTTK) are compositionally biased toward polar residues. A compositionally biased stretch (basic and acidic residues) spans 427-437 (PDPDREIPTDQ).

Belongs to the D-isomer specific 2-hydroxyacid dehydrogenase family. As to quaternary structure, interacts with the C-terminus of tcf7l1-a via the consensus motifs P-X-[DNS]-L-[STVA].

The protein resides in the nucleus. Corepressor targeting diverse transcription regulators. The polypeptide is C-terminal-binding protein 2 (ctbp2) (Xenopus laevis (African clawed frog)).